We begin with the raw amino-acid sequence, 308 residues long: Urease accessory protein UreD (308 aa).

It belongs to the UreD family. In terms of assembly, ureD, UreF and UreG form a complex that acts as a GTP-hydrolysis-dependent molecular chaperone, activating the urease apoprotein by helping to assemble the nickel containing metallocenter of UreC. The UreE protein probably delivers the nickel.

The protein resides in the cytoplasm. Required for maturation of urease via the functional incorporation of the urease nickel metallocenter. The polypeptide is Urease accessory protein UreD (Psychromonas ingrahamii (strain DSM 17664 / CCUG 51855 / 37)).